Consider the following 47-residue polypeptide: Large ribosomal subunit protein bL27c (47 aa).

The segment at 1-21 (STKNGRDSNAQRLGVKKYGGE) is disordered.

Belongs to the bacterial ribosomal protein bL27 family.

Its subcellular location is the plastid. It is found in the chloroplast. This chain is Large ribosomal subunit protein bL27c (rpl27), found in Porphyridium purpureum (Red alga).